Consider the following 274-residue polypeptide: Hydroxyethylthiazole kinase (274 aa).

M51 serves as a coordination point for substrate. Residues R127 and S173 each contribute to the ATP site. Substrate is bound at residue G200.

This sequence belongs to the Thz kinase family. Mg(2+) serves as cofactor.

The catalysed reaction is 5-(2-hydroxyethyl)-4-methylthiazole + ATP = 4-methyl-5-(2-phosphooxyethyl)-thiazole + ADP + H(+). It participates in cofactor biosynthesis; thiamine diphosphate biosynthesis; 4-methyl-5-(2-phosphoethyl)-thiazole from 5-(2-hydroxyethyl)-4-methylthiazole: step 1/1. In terms of biological role, catalyzes the phosphorylation of the hydroxyl group of 4-methyl-5-beta-hydroxyethylthiazole (THZ). This is Hydroxyethylthiazole kinase from Photobacterium profundum (strain SS9).